The following is a 209-amino-acid chain: Small ribosomal subunit protein uS5 (209 aa).

The span at 1–11 (MTQPNTQTTPN) shows a compositional bias: polar residues. The tract at residues 1 to 55 (MTQPNTQTTPNDVPAAAEGQQEQQQQQRRGGGRERRGGGRRGDRRGQERDSEWQE) is disordered. The segment covering 18 to 28 (EGQQEQQQQQR) has biased composition (low complexity). The segment covering 31 to 55 (GGRERRGGGRRGDRRGQERDSEWQE) has biased composition (basic and acidic residues). Residues 53 to 116 (WQERVVQIRR…ADGKKHLVKV (64 aa)) form the S5 DRBM domain.

It belongs to the universal ribosomal protein uS5 family. In terms of assembly, part of the 30S ribosomal subunit. Contacts proteins S4 and S8.

In terms of biological role, with S4 and S12 plays an important role in translational accuracy. Its function is as follows. Located at the back of the 30S subunit body where it stabilizes the conformation of the head with respect to the body. This chain is Small ribosomal subunit protein uS5, found in Prochlorococcus marinus (strain MIT 9313).